Here is a 256-residue protein sequence, read N- to C-terminus: Dioxygenase lolE1 (256 aa).

His125, Asp127, and His203 together coordinate Fe cation.

The protein belongs to the PhyH family. In terms of assembly, homodimer. Requires Fe cation as cofactor.

The protein operates within alkaloid biosynthesis. Functionally, dioxygenase; part of the gene cluster that mediates the biosynthesis of loline alkaloids, potent insecticidal agents composed of a pyrrolizidine ring system and an uncommon ether bridge linking carbons 2 and 7. Lolines are structurally differentiated by the various modifications of the L-amino group and include norloline, loline, N-methylloline, N-acetylloline, N-acetylnorloline, and N-formylloline. The first committed step is the condensation of O-acetyl-L-homoserine (derived from L-aspartic acid) and L-proline, probably catalyzed by the gamma-type pyridoxal 5'-phosphate(PLP)-dependent enzyme lolC, to give the diamino diacid, NACPP. Ensuing cyclization, decarboxylation, and acetylation steps yield 1-exo-acetamidopyrrolizidine (AcAP). LolO is required for installation of the ether bridge upon the pathway intermediate, 1-exo-acetamidopyrrolizidine (AcAP). In sequential 2-oxoglutarate- and O(2)-consuming steps, lolO removes hydrogens from C2 and C7 of AcAP to form both carbon-oxygen bonds in N-acetylnorloline (NANL), the precursor to all other lolines. The enzymes lolD, lolE, lolF and lolT have also been proposed to be involved in the ether-bridge installation. Further processing of the exocyclic moiety of NANL by fungal N-acetamidase (LolN), methyltransferase (LolM), and cytochrome P450 (LolP) enzymes, with occasional involvement of a plant acetyltransferase, generates the other known lolines. LolN transforms NANL to norlonine which is monomethylated and dimethylated to respectively lonine and N-methyllonine (NML) by lolM. LolP catalyzes hydroxylation of the methyl group in N-methylloline (NML) and further oxygenation to N-formylloline (NFL). A plant acetyltransferase is responsible for the acetylation of loline to form N-acetylloline (NAL). LolA might interact with aspartate kinase to prevent feedback inhibition of its activity by these end products and thereby promote production of L-homoserine from L-aspartate. The protein is Dioxygenase lolE1 of Epichloe uncinata (Endophyte fungus).